The primary structure comprises 144 residues: Acidic phospholipase A2 (144 aa).

A signal peptide spans 1-19 (MYPAHLLVLLAVCVSLLGA). The propeptide occupies 20–27 (SDIPPLPL). 7 cysteine pairs are disulfide-bonded: Cys-38/Cys-98, Cys-54/Cys-143, Cys-56/Cys-72, Cys-71/Cys-125, Cys-78/Cys-118, Cys-87/Cys-111, and Cys-105/Cys-116. Ca(2+) contacts are provided by Tyr-55, Gly-57, and Gly-59. His-75 is an active-site residue. Asp-76 provides a ligand contact to Ca(2+). Residue Asp-119 is part of the active site.

This sequence belongs to the phospholipase A2 family. Group I subfamily. D49 sub-subfamily. The cofactor is Ca(2+). As to expression, expressed by the venom gland.

The protein localises to the secreted. It carries out the reaction a 1,2-diacyl-sn-glycero-3-phosphocholine + H2O = a 1-acyl-sn-glycero-3-phosphocholine + a fatty acid + H(+). In terms of biological role, PLA2 catalyzes the calcium-dependent hydrolysis of the 2-acyl groups in 3-sn-phosphoglycerides. The chain is Acidic phospholipase A2 from Aipysurus laevis (Olive sea snake).